Here is a 194-residue protein sequence, read N- to C-terminus: Adenylate kinase (194 aa).

An ATP-binding site is contributed by 10–15; that stretch reads GAGKGT. The NMP stretch occupies residues 30–59; that stretch reads STGDMLRAAVAQQSEIGKRAKAVMDAGQLV. AMP is bound by residues threonine 31, arginine 36, 57-59, 85-88, and glutamine 92; these read QLV and GYPR. Positions 126 to 142 are LID; the sequence is SRVAETIAKGGQVRSDD. Arginine 127 provides a ligand contact to ATP. Arginine 139 and arginine 150 together coordinate AMP. ATP is bound at residue alanine 178.

The protein belongs to the adenylate kinase family. Monomer.

It localises to the cytoplasm. It carries out the reaction AMP + ATP = 2 ADP. It functions in the pathway purine metabolism; AMP biosynthesis via salvage pathway; AMP from ADP: step 1/1. Its function is as follows. Catalyzes the reversible transfer of the terminal phosphate group between ATP and AMP. Plays an important role in cellular energy homeostasis and in adenine nucleotide metabolism. This Brucella abortus (strain S19) protein is Adenylate kinase.